Consider the following 638-residue polypeptide: Probable glycerol-3-phosphate dehydrogenase, mitochondrial (638 aa).

100 to 128 (DLIVIGGGATGTGVALDAQSRGMKVALFE) contributes to the FAD binding site.

Belongs to the FAD-dependent glycerol-3-phosphate dehydrogenase family. It depends on FAD as a cofactor.

The protein localises to the mitochondrion. It catalyses the reaction a quinone + sn-glycerol 3-phosphate = dihydroxyacetone phosphate + a quinol. It functions in the pathway polyol metabolism; glycerol degradation via glycerol kinase pathway; glycerone phosphate from sn-glycerol 3-phosphate (anaerobic route): step 1/1. The sequence is that of Probable glycerol-3-phosphate dehydrogenase, mitochondrial from Dictyostelium discoideum (Social amoeba).